Here is a 283-residue protein sequence, read N- to C-terminus: 4-diphosphocytidyl-2-C-methyl-D-erythritol kinase (283 aa).

The active site involves K10. Position 99 to 109 (99 to 109) interacts with ATP; the sequence is PMGGGLGGGSS. D141 is a catalytic residue.

It belongs to the GHMP kinase family. IspE subfamily. In terms of assembly, homodimer.

The catalysed reaction is 4-CDP-2-C-methyl-D-erythritol + ATP = 4-CDP-2-C-methyl-D-erythritol 2-phosphate + ADP + H(+). It participates in isoprenoid biosynthesis; isopentenyl diphosphate biosynthesis via DXP pathway; isopentenyl diphosphate from 1-deoxy-D-xylulose 5-phosphate: step 3/6. Its function is as follows. Catalyzes the phosphorylation of the position 2 hydroxy group of 4-diphosphocytidyl-2C-methyl-D-erythritol. The chain is 4-diphosphocytidyl-2-C-methyl-D-erythritol kinase from Shigella boydii serotype 18 (strain CDC 3083-94 / BS512).